A 505-amino-acid chain; its full sequence is Exoglucanase 1 (505 aa).

Positions 1–17 are cleaved as a signal peptide; it reads MYRKLAVISAFLAAARA. Glutamine 18 carries the post-translational modification Pyrrolidone carboxylic acid. The segment at 18-449 is catalytic; that stretch reads QQVCTQQAET…GSTGGNTGSN (432 aa). 4 disulfides stabilise this stretch: cysteine 21-cysteine 88, cysteine 36-cysteine 41, cysteine 66-cysteine 87, and cysteine 77-cysteine 83. Asparagine 93 and asparagine 126 each carry an N-linked (GlcNAc...) asparagine glycan. 6 cysteine pairs are disulfide-bonded: cysteine 151-cysteine 410, cysteine 185-cysteine 223, cysteine 189-cysteine 222, cysteine 243-cysteine 269, cysteine 251-cysteine 256, and cysteine 274-cysteine 344. Glutamate 225 (nucleophile) is an active-site residue. The active-site Proton donor/acceptor is glutamate 230. 2 N-linked (GlcNAc...) asparagine glycosylation sites follow: asparagine 283 and asparagine 397. Disordered regions lie at residues 399 to 423 and 440 to 472; these read TAST…VEAQ and GSTG…ATQT. Over residues 409 to 423 the composition is skewed to polar residues; it reads SCSTSSGVPAQVEAQ. Positions 447-470 are enriched in low complexity; it reads GSNPPGTSTTRAPPSSTGSSPTAT. The linker stretch occupies residues 450–468; sequence PPGTSTTRAPPSSTGSSPT. Residues 469–505 form the CBM1 domain; it reads ATQTHYGQCGGTGWTGPTRCASGYTCQVLNPFYSQCL.

The protein belongs to the glycosyl hydrolase 7 (cellulase C) family. Post-translationally, O-glycosylated. O-glycosylation of the cellulase linker provides protection from proteolysis. Linker glycans also contribute to binding affinity of cellobiohydrolases to cellulose.

It is found in the secreted. It catalyses the reaction Hydrolysis of (1-&gt;4)-beta-D-glucosidic linkages in cellulose and cellotetraose, releasing cellobiose from the non-reducing ends of the chains.. Its function is as follows. Exocellobiohydrolases (CBH) that catalyzes the hydrolysis of 1,4-beta-D-glucosidic bonds in cellulose to release the disaccharide cellobiose. The degradation of cellulose involves an interplay between different cellulolytic enzymes. Hydrolysis starts with endoglucanases (EGs), which cut internal beta-1,4-glucosidic bonds in cellulose to reduce the polymerization degree of the substrate and create new chain ends for exocellobiohydrolases (CBHs). The CBHs release the disaccharide cellobiose from the non-reducing end of the cellulose polymer chain. Finally, beta-1,4-glucosidases hydrolyze the cellobiose and other short cello-oligosaccharides into glucose units. This Trichoderma harzianum (Hypocrea lixii) protein is Exoglucanase 1 (cbh1).